We begin with the raw amino-acid sequence, 447 residues long: Aladin (447 aa).

The segment at 49–69 is disordered; that stretch reads STPSSLQENEGQENGDKASGE. WD repeat units lie at residues 97 to 138, 142 to 181, 210 to 250, and 252 to 291; these read LSEI…EPCI, DSQR…NMAL, QNDE…GTPI, and RGLG…SEPW.

In terms of assembly, part of the nuclear pore complex (NPC). The NPC has an eight-fold symmetrical structure comprising a central transport channel and two rings, the cytoplasmic and nuclear rings, to which eight filaments are attached. The cytoplasmic filaments have loose ends, while the nuclear filaments are joined in a distal ring, forming a nuclear basket. NPCs are highly dynamic in configuration and composition, and can be devided in 3 subcomplexes, the NUP62 subcomplex, the NUP107-160 subcomplex and the NUP93 subcomplex, containing approximately 30 different nucleoporin proteins.

It localises to the nucleus envelope. The protein localises to the nucleus. The protein resides in the nuclear pore complex. The chain is Aladin from Arabidopsis thaliana (Mouse-ear cress).